A 229-amino-acid chain; its full sequence is Adenylate kinase 1 (229 aa).

42-47 lines the ATP pocket; that stretch reads GCGKGT. Ser62 bears the Phosphoserine mark. AMP is bound by residues Ser63, Arg68, 118-121, and Gln125; that span reads GYPR. An ATP-binding site is contributed by Arg156. Residues Arg164 and Arg175 each coordinate AMP.

Belongs to the adenylate kinase family. AK1 subfamily. High expression levels in the thorax, suggesting a possible function in the gastrointestinal or reproductive systems.

It localises to the cytoplasm. The catalysed reaction is AMP + ATP = 2 ADP. Its function is as follows. Catalyzes the reversible transfer of the terminal phosphate group between ATP and AMP. Plays an important role in cellular energy homeostasis and in adenine nucleotide metabolism. This Drosophila melanogaster (Fruit fly) protein is Adenylate kinase 1.